We begin with the raw amino-acid sequence, 491 residues long: Cytochrome P450 2B9 (491 aa).

At serine 128 the chain carries Phosphoserine; by PKA. Residue cysteine 436 coordinates heme.

It belongs to the cytochrome P450 family. It depends on heme as a cofactor.

The protein localises to the endoplasmic reticulum membrane. Its subcellular location is the microsome membrane. The enzyme catalyses an organic molecule + reduced [NADPH--hemoprotein reductase] + O2 = an alcohol + oxidized [NADPH--hemoprotein reductase] + H2O + H(+). Its function is as follows. Cytochromes P450 are a group of heme-thiolate monooxygenases. In liver microsomes, this enzyme is involved in an NADPH-dependent electron transport pathway. It oxidizes a variety of structurally unrelated compounds, including steroids, fatty acids, and xenobiotics. In Mus musculus (Mouse), this protein is Cytochrome P450 2B9 (Cyp2b9).